Here is a 102-residue protein sequence, read N- to C-terminus: Thioredoxin (102 aa).

The Thioredoxin domain maps to 2–102 (LHIDELTFEN…ILIHTINKYL (101 aa)). Residues Cys29 and Cys32 each act as nucleophile in the active site. A disulfide bridge connects residues Cys29 and Cys32.

Belongs to the thioredoxin family.

It is found in the plastid. The protein resides in the chloroplast. Functionally, participates in various redox reactions through the reversible oxidation of its active center dithiol to a disulfide and catalyzes dithiol-disulfide exchange reactions. This chain is Thioredoxin (trxA), found in Cyanidioschyzon merolae (strain NIES-3377 / 10D) (Unicellular red alga).